Here is a 227-residue protein sequence, read N- to C-terminus: MSALLKASRNDAIIARCLQTISQLIPLTSAVFYRVNNRLKPENYILHNISDNTHQQYLENFQPLDPLLPSHFSHQNTTVAAMTPRLCDRNRHYYHEFMLPNNVRDMTEIFIRRERRIVAGISLMRDVPFSSEERQRAQAVLPLVELAIRDCLQEEDDLPAILTAKEREIVGMVREGASNKLIARQLDISLSTVKTHLRNIFAKTEVVNRTELVSRTWMPAAQRTLHL.

An HTH luxR-type domain is found at 155–220 (EDDLPAILTA…ELVSRTWMPA (66 aa)). The H-T-H motif DNA-binding region spans 179–198 (NKLIARQLDISLSTVKTHLR).

Its function is as follows. Positive regulatory protein for the induction of arylsulfatase synthesis (maoA), tyramine oxidase (tynA), maoC, maoE/F operon, and atsB/A operon which are all regulated by monoamines, and included under the common term of monoamine regulon. The sequence is that of Monoamine regulon transcriptional regulator (moaR) from Klebsiella aerogenes (Enterobacter aerogenes).